The following is a 273-amino-acid chain: NH(3)-dependent NAD(+) synthetase (273 aa).

34–41 is an ATP binding site; it reads GLSGGIDS. Residue Asp-40 coordinates Mg(2+). Arg-116 contacts deamido-NAD(+). Residue Thr-136 coordinates ATP. Position 141 (Glu-141) interacts with Mg(2+). ATP is bound by residues Lys-165 and Ser-187.

This sequence belongs to the NAD synthetase family. In terms of assembly, homodimer.

It carries out the reaction deamido-NAD(+) + NH4(+) + ATP = AMP + diphosphate + NAD(+) + H(+). The protein operates within cofactor biosynthesis; NAD(+) biosynthesis; NAD(+) from deamido-NAD(+) (ammonia route): step 1/1. Its function is as follows. Catalyzes the ATP-dependent amidation of deamido-NAD to form NAD. Uses ammonia as a nitrogen source. The polypeptide is NH(3)-dependent NAD(+) synthetase (Trichlorobacter lovleyi (strain ATCC BAA-1151 / DSM 17278 / SZ) (Geobacter lovleyi)).